Here is a 50-residue protein sequence, read N- to C-terminus: Large ribosomal subunit protein eL39 (50 aa).

Belongs to the eukaryotic ribosomal protein eL39 family. Part of the 50S ribosomal subunit. Interacts weakly with protein L23.

In terms of biological role, binds to the 23S rRNA. Forms part of the polypeptide exit tunnel. In Haloarcula marismortui (strain ATCC 43049 / DSM 3752 / JCM 8966 / VKM B-1809) (Halobacterium marismortui), this protein is Large ribosomal subunit protein eL39 (rpl39e).